The sequence spans 152 residues: Protein Turandot X (152 aa).

A signal peptide spans 1-22 (MGFYISSLLICVFLGIVRFASA).

This sequence belongs to the Turandot family.

The protein localises to the secreted. In terms of biological role, a humoral factor that may play a role in stress tolerance. This chain is Protein Turandot X, found in Drosophila erecta (Fruit fly).